Consider the following 187-residue polypeptide: GTP cyclohydrolase 1 (187 aa).

Zn(2+) is bound by residues cysteine 76, histidine 79, and cysteine 148.

This sequence belongs to the GTP cyclohydrolase I family. As to quaternary structure, toroid-shaped homodecamer, composed of two pentamers of five dimers.

The catalysed reaction is GTP + H2O = 7,8-dihydroneopterin 3'-triphosphate + formate + H(+). The protein operates within cofactor biosynthesis; 7,8-dihydroneopterin triphosphate biosynthesis; 7,8-dihydroneopterin triphosphate from GTP: step 1/1. This is GTP cyclohydrolase 1 from Acetivibrio thermocellus (strain ATCC 27405 / DSM 1237 / JCM 9322 / NBRC 103400 / NCIMB 10682 / NRRL B-4536 / VPI 7372) (Clostridium thermocellum).